We begin with the raw amino-acid sequence, 679 residues long: DNA ligase (679 aa).

NAD(+)-binding positions include 32–36, 81–82, and glutamate 115; these read DTLYD and SL. Lysine 117 acts as the N6-AMP-lysine intermediate in catalysis. Residues arginine 138, glutamate 175, lysine 293, and lysine 317 each coordinate NAD(+). Residues cysteine 411, cysteine 414, cysteine 429, and cysteine 434 each contribute to the Zn(2+) site. In terms of domain architecture, BRCT spans 601-679; sequence NSSGALLGKT…EAELQKLLST (79 aa).

Belongs to the NAD-dependent DNA ligase family. LigA subfamily. It depends on Mg(2+) as a cofactor. Requires Mn(2+) as cofactor.

It catalyses the reaction NAD(+) + (deoxyribonucleotide)n-3'-hydroxyl + 5'-phospho-(deoxyribonucleotide)m = (deoxyribonucleotide)n+m + AMP + beta-nicotinamide D-nucleotide.. In terms of biological role, DNA ligase that catalyzes the formation of phosphodiester linkages between 5'-phosphoryl and 3'-hydroxyl groups in double-stranded DNA using NAD as a coenzyme and as the energy source for the reaction. It is essential for DNA replication and repair of damaged DNA. The polypeptide is DNA ligase (Parasynechococcus marenigrum (strain WH8102)).